We begin with the raw amino-acid sequence, 89 residues long: Small ribosomal subunit protein uS15 (89 aa).

Belongs to the universal ribosomal protein uS15 family. As to quaternary structure, part of the 30S ribosomal subunit. Forms a bridge to the 50S subunit in the 70S ribosome, contacting the 23S rRNA.

One of the primary rRNA binding proteins, it binds directly to 16S rRNA where it helps nucleate assembly of the platform of the 30S subunit by binding and bridging several RNA helices of the 16S rRNA. Functionally, forms an intersubunit bridge (bridge B4) with the 23S rRNA of the 50S subunit in the ribosome. This is Small ribosomal subunit protein uS15 from Marinomonas sp. (strain MWYL1).